Here is a 1406-residue protein sequence, read N- to C-terminus: DNA-directed RNA polymerase subunit beta' (1406 aa).

Positions 70, 72, 85, and 88 each coordinate Zn(2+). Mg(2+)-binding residues include aspartate 460, aspartate 462, and aspartate 464. Zn(2+)-binding residues include cysteine 814, cysteine 889, cysteine 896, and cysteine 899.

It belongs to the RNA polymerase beta' chain family. In terms of assembly, the RNAP catalytic core consists of 2 alpha, 1 beta, 1 beta' and 1 omega subunit. When a sigma factor is associated with the core the holoenzyme is formed, which can initiate transcription. Mg(2+) serves as cofactor. The cofactor is Zn(2+).

It catalyses the reaction RNA(n) + a ribonucleoside 5'-triphosphate = RNA(n+1) + diphosphate. Functionally, DNA-dependent RNA polymerase catalyzes the transcription of DNA into RNA using the four ribonucleoside triphosphates as substrates. The polypeptide is DNA-directed RNA polymerase subunit beta' (Psychromonas ingrahamii (strain DSM 17664 / CCUG 51855 / 37)).